The chain runs to 529 residues: Cytochrome P450 monooxygenase 45 (529 aa).

Residues 24–44 (VLTICILALLTFVLREIVLYF) form a helical membrane-spanning segment. 2 N-linked (GlcNAc...) asparagine glycosylation sites follow: Asn-185 and Asn-322. Cys-454 contacts heme.

Belongs to the cytochrome P450 family. The cofactor is heme.

It localises to the membrane. It participates in secondary metabolite biosynthesis. Functionally, cytochrome P450 monooxygenase that is able to use trans-stilbene as a substrate for oxidation. The protein is Cytochrome P450 monooxygenase 45 of Postia placenta (strain ATCC 44394 / Madison 698-R) (Brown rot fungus).